The sequence spans 304 residues: Putative F-box/LRR-repeat protein 21 (304 aa).

Residues 43-90 (RRNWVDLPPELTTSILLRLSLTDILDNAQKVCKEWRRICKDPSMWRKI) enclose the F-box domain. LRR repeat units follow at residues 132-159 (LSYI…GVVN), 173-198 (THSC…KLNS), 218-241 (GPLE…HLQL), and 243-268 (ANRL…DVRK).

This is Putative F-box/LRR-repeat protein 21 (FBL21) from Arabidopsis thaliana (Mouse-ear cress).